The following is a 141-amino-acid chain: Vesicle-associated membrane protein 4 (141 aa).

The tract at residues 1–51 (MPPKFKRHLNDDDVTGSVKSERRNLLEDDSDEEEDFFLRGPSGPRFGPRND) is disordered. The Cytoplasmic segment spans residues 1-115 (MPPKFKRHLN…RRQMWWRGCK (115 aa)). Residues S17 and S30 each carry the phosphoserine modification. A v-SNARE coiled-coil homology domain is found at 52–112 (KIKHVQNQVD…KQLRRQMWWR (61 aa)). A helical; Anchor for type IV membrane protein membrane pass occupies residues 116–136 (IKAIMALVAAILLLVIIILIV). Topologically, residues 137-141 (MKYRT) are vesicular.

Belongs to the synaptobrevin family. As to quaternary structure, identified in a complex containing STX6, STX12, VAMP4 and VTI1A. Interacts with BAIAP3; this interaction is increased in the presence of calcium.

Its subcellular location is the golgi apparatus. It is found in the trans-Golgi network membrane. In terms of biological role, involved in the pathway that functions to remove an inhibitor (probably synaptotagmin-4) of calcium-triggered exocytosis during the maturation of secretory granules. May be a marker for this sorting pathway that is critical for remodeling the secretory response of granule. In Homo sapiens (Human), this protein is Vesicle-associated membrane protein 4 (VAMP4).